Reading from the N-terminus, the 1184-residue chain is Probable phospholipid-transporting ATPase 12 (1184 aa).

The Cytoplasmic portion of the chain corresponds to M1 to L75. The chain crosses the membrane as a helical span at residues P76–L97. The Extracellular portion of the chain corresponds to S98–P101. Residues L102–K124 traverse the membrane as a helical segment. Residues E125 to I306 lie on the Cytoplasmic side of the membrane. The helical transmembrane segment at I307 to W328 threads the bilayer. Residues T329–H364 are Extracellular-facing. The chain crosses the membrane as a helical span at residues F365 to V382. Topologically, residues S383–S921 are cytoplasmic. D430 acts as the 4-aspartylphosphate intermediate in catalysis. Residues D866 and D870 each contribute to the Mg(2+) site. The helical transmembrane segment at K922–Y941 threads the bilayer. At E942–D955 the chain is on the extracellular side. The helical transmembrane segment at W956–I975 threads the bilayer. Residues F976 to R1005 lie on the Cytoplasmic side of the membrane. Residues I1006–L1028 form a helical membrane-spanning segment. The Extracellular portion of the chain corresponds to E1029 to G1041. A helical membrane pass occupies residues R1042–T1064. Residues I1065 to L1070 lie on the Cytoplasmic side of the membrane. Residues I1071 to G1091 form a helical membrane-spanning segment. Residues S1092 to A1108 lie on the Extracellular side of the membrane. Residues L1109–F1133 form a helical membrane-spanning segment. Topologically, residues S1134–S1184 are cytoplasmic.

The protein belongs to the cation transport ATPase (P-type) (TC 3.A.3) family. Type IV subfamily.

The protein localises to the membrane. The enzyme catalyses ATP + H2O + phospholipidSide 1 = ADP + phosphate + phospholipidSide 2.. In terms of biological role, involved in transport of phospholipids. The sequence is that of Probable phospholipid-transporting ATPase 12 from Arabidopsis thaliana (Mouse-ear cress).